Reading from the N-terminus, the 590-residue chain is Aspartate--tRNA(Asp/Asn) ligase (590 aa).

Residue Glu-178 participates in L-aspartate binding. The tract at residues Gln-202–Lys-205 is aspartate. Arg-224 is an L-aspartate binding site. Residues Arg-224–Glu-226 and Gln-233 each bind ATP. His-453 lines the L-aspartate pocket. Residue Glu-487 coordinates ATP. Arg-494 is an L-aspartate binding site. Gly-539–Arg-542 is an ATP binding site.

It belongs to the class-II aminoacyl-tRNA synthetase family. Type 1 subfamily. In terms of assembly, homodimer.

It is found in the cytoplasm. It catalyses the reaction tRNA(Asx) + L-aspartate + ATP = L-aspartyl-tRNA(Asx) + AMP + diphosphate. Aspartyl-tRNA synthetase with relaxed tRNA specificity since it is able to aspartylate not only its cognate tRNA(Asp) but also tRNA(Asn). Reaction proceeds in two steps: L-aspartate is first activated by ATP to form Asp-AMP and then transferred to the acceptor end of tRNA(Asp/Asn). This Treponema denticola (strain ATCC 35405 / DSM 14222 / CIP 103919 / JCM 8153 / KCTC 15104) protein is Aspartate--tRNA(Asp/Asn) ligase.